The primary structure comprises 153 residues: Mediator of RNA polymerase II transcription subunit 22 (153 aa).

Belongs to the Mediator complex subunit 22 family. In terms of assembly, component of the Mediator complex.

It localises to the nucleus. Its function is as follows. Component of the Mediator complex, a coactivator involved in the regulated transcription of nearly all RNA polymerase II-dependent genes. Mediator functions as a bridge to convey information from gene-specific regulatory proteins to the basal RNA polymerase II transcription machinery. Mediator is recruited to promoters by direct interactions with regulatory proteins and serves as a scaffold for the assembly of a functional preinitiation complex with RNA polymerase II and the general transcription factors. The protein is Mediator of RNA polymerase II transcription subunit 22 (mdt-22) of Caenorhabditis briggsae.